A 122-amino-acid polypeptide reads, in one-letter code: MFARVSTLFAMFFLGLALMVSATPAALKPVARDTIPASQCNTGDLQCCNTVENADSPSAAALLGLLGVVVQGLDVLVGLTCTPITVIGVGSGANCVQQPVCCENNNFNGLINIGCTPVNLGL.

An N-terminal signal peptide occupies residues 1–22; that stretch reads MFARVSTLFAMFFLGLALMVSA. 4 disulfide bridges follow: Cys40/Cys101, Cys47/Cys95, Cys48/Cys81, and Cys102/Cys115.

It belongs to the fungal hydrophobin family. As to quaternary structure, self-assembles to form functional amyloid fibrils called rodlets. Self-assembly into fibrillar rodlets occurs spontaneously at hydrophobic:hydrophilic interfaces and the rodlets further associate laterally to form amphipathic monolayers.

Its subcellular location is the secreted. It is found in the cell wall. In terms of biological role, aerial growth, conidiation, and dispersal of filamentous fungi in the environment rely upon a capability of their secreting small amphipathic proteins called hydrophobins (HPBs) with low sequence identity. Class I can self-assemble into an outermost layer of rodlet bundles on aerial cell surfaces, conferring cellular hydrophobicity that supports fungal growth, development and dispersal; whereas Class II form highly ordered films at water-air interfaces through intermolecular interactions but contribute nothing to the rodlet structure. Hah2 is a class I hydrophobin that is involved in aerial growth of mycelia, but does not play a role in pathogenesis. The sequence is that of Class I hydrophobin 2 from Heterobasidion annosum (Root rot fungus).